We begin with the raw amino-acid sequence, 238 residues long: Pyridoxine 5'-phosphate synthase (238 aa).

Asn9 contacts 3-amino-2-oxopropyl phosphate. 11-12 (DH) is a binding site for 1-deoxy-D-xylulose 5-phosphate. Arg20 contacts 3-amino-2-oxopropyl phosphate. The active-site Proton acceptor is His45. 2 residues coordinate 1-deoxy-D-xylulose 5-phosphate: Arg47 and His52. Glu72 acts as the Proton acceptor in catalysis. 1-deoxy-D-xylulose 5-phosphate is bound at residue Thr102. His189 (proton donor) is an active-site residue. 3-amino-2-oxopropyl phosphate is bound by residues Gly190 and 211–212 (GH).

The protein belongs to the PNP synthase family. As to quaternary structure, homooctamer; tetramer of dimers.

It localises to the cytoplasm. It catalyses the reaction 3-amino-2-oxopropyl phosphate + 1-deoxy-D-xylulose 5-phosphate = pyridoxine 5'-phosphate + phosphate + 2 H2O + H(+). The protein operates within cofactor biosynthesis; pyridoxine 5'-phosphate biosynthesis; pyridoxine 5'-phosphate from D-erythrose 4-phosphate: step 5/5. Catalyzes the complicated ring closure reaction between the two acyclic compounds 1-deoxy-D-xylulose-5-phosphate (DXP) and 3-amino-2-oxopropyl phosphate (1-amino-acetone-3-phosphate or AAP) to form pyridoxine 5'-phosphate (PNP) and inorganic phosphate. This Ehrlichia ruminantium (strain Gardel) protein is Pyridoxine 5'-phosphate synthase.